We begin with the raw amino-acid sequence, 137 residues long: Cytochrome c2 (137 aa).

Residues 1 to 21 (MKISLTAATVAALVLAAPAFA) form the signal peptide. The heme c site is built by C34, C37, H38, and M117.

It belongs to the cytochrome c family. Binds 1 heme c group covalently per subunit.

Its function is as follows. Cytochrome c2 is found mainly in purple, non-sulfur, photosynthetic bacteria where it functions as the electron donor to the oxidized bacteriochlorophyll in the photophosphorylation pathway. However, it may also have a role in the respiratory chain and is found in some non-photosynthetic bacteria. This is Cytochrome c2 (cycA) from Rhodobacter capsulatus (strain ATCC BAA-309 / NBRC 16581 / SB1003).